Consider the following 215-residue polypeptide: Cytochrome b6 (215 aa).

Residues 32–52 form a helical membrane-spanning segment; that stretch reads IFYCLGGITLTCFLVQVATGF. Cys35 is a heme c binding site. The heme b site is built by His86 and His100. Transmembrane regions (helical) follow at residues 90–110, 116–136, and 186–206; these read ASMMVLMMILHVFRVYLTGGF, LTWVTGVILAVLTASFGVTGY, and LHTFVLPLLTAVFMLMHFSMI. Heme b is bound by residues His187 and His202.

Belongs to the cytochrome b family. PetB subfamily. As to quaternary structure, the 4 large subunits of the cytochrome b6-f complex are cytochrome b6, subunit IV (17 kDa polypeptide, PetD), cytochrome f and the Rieske protein, while the 4 small subunits are PetG, PetL, PetM and PetN. The complex functions as a dimer. Requires heme b as cofactor. It depends on heme c as a cofactor.

Its subcellular location is the plastid. The protein resides in the chloroplast thylakoid membrane. Functionally, component of the cytochrome b6-f complex, which mediates electron transfer between photosystem II (PSII) and photosystem I (PSI), cyclic electron flow around PSI, and state transitions. This Piper cenocladum (Ant piper) protein is Cytochrome b6.